The following is a 599-amino-acid chain: Putative ATP-dependent helicase YeeB (599 aa).

One can recognise a Helicase ATP-binding domain in the interval 30 to 207 (AFEKRNSQYL…LLPEDEELFD (178 aa)). Residue 43–50 (APPASGKS) coordinates ATP. Positions 154–157 (DEFH) match the DEAH box motif. Positions 236–408 (QYTSAINEVL…TVNTMLKAIS (173 aa)) constitute a Helicase C-terminal domain.

Belongs to the helicase family.

In Bacillus subtilis (strain 168), this protein is Putative ATP-dependent helicase YeeB (yeeB).